Here is a 720-residue protein sequence, read N- to C-terminus: Polyribonucleotide nucleotidyltransferase (720 aa).

Residues Asp487 and Asp493 each contribute to the Mg(2+) site. One can recognise a KH domain in the interval 554–613 (PRIETFKIPTDKIREVIGTGGKVIREIVEKTGAKVNIEDDGTVKVASSDGEAMKAAIKWI). An S1 motif domain is found at 623 to 691 (GQIYDGTVVK…DRGKTRLSMK (69 aa)). The segment at 699–720 (EDLEAKDKVAEGEKAPREAAGE) is disordered. A compositionally biased stretch (basic and acidic residues) spans 701-720 (LEAKDKVAEGEKAPREAAGE).

The protein belongs to the polyribonucleotide nucleotidyltransferase family. The cofactor is Mg(2+).

It localises to the cytoplasm. The enzyme catalyses RNA(n+1) + phosphate = RNA(n) + a ribonucleoside 5'-diphosphate. In terms of biological role, involved in mRNA degradation. Catalyzes the phosphorolysis of single-stranded polyribonucleotides processively in the 3'- to 5'-direction. This is Polyribonucleotide nucleotidyltransferase from Bradyrhizobium diazoefficiens (strain JCM 10833 / BCRC 13528 / IAM 13628 / NBRC 14792 / USDA 110).